We begin with the raw amino-acid sequence, 250 residues long: Endomucin (250 aa).

Residues 1–20 (MRLLQVTALFFLLSNSLCRG) form the signal peptide. 2 stretches are compositionally biased toward low complexity: residues 24–38 (KALT…SATT) and 45–60 (TNKS…TTNS). Disordered regions lie at residues 24–83 (KALT…ETTT) and 105–153 (NAVS…LTTA). Residues Asn-46, Asn-115, and Asn-119 are each glycosylated (N-linked (GlcNAc...) asparagine). Composition is skewed to polar residues over residues 105–135 (NAVS…NQLP) and 143–153 (TETPSASLTTA). The helical transmembrane segment at 180–200 (VILPVVIALIVITVLVFTLVG) threads the bilayer. A disordered region spans residues 210–250 (PGTPESGNDQPQSDKESVKLLTVKTISHESGEHSAQGKAKN). Ser-226 carries the post-translational modification Phosphoserine.

Post-translationally, highly O-glycosylated. Sialic acid-rich glycoprotein.

Its subcellular location is the membrane. Endothelial sialomucin, also called endomucin or mucin-like sialoglycoprotein, which interferes with the assembly of focal adhesion complexes and inhibits interaction between cells and the extracellular matrix. The sequence is that of Endomucin (Emcn) from Rattus norvegicus (Rat).